The primary structure comprises 809 residues: MSSVEELTQLFSQVGFEDKKVKEIVKNKKVSDSLYKLIKETPSDYQWNKSTRALVHNLASFVKGTDLPKSELIVNGIINGDLKTSLQVDAAFKYVKANGEASTKMGMNENSGVGIEITEDQVRNYVMQYIQENKERILTERYKLVPGIFADVKNLKELKWADPRSFKPIIDQEVLKLLGPKDERDLIKKKTKNNEKKKTNSAKKSSDNSASSGPKRTMFNEGFLGDLHKVGENPQAYPELMKEHLEVTGGKVRTRFPPEPNGYLHIGHSKAIMVNFGYAKYHNGTCYLRFDDTNPEKEAPEYFESIKRMVSWLGFKPWKITYSSDYFDELYRLAEVLIKNGKAYVCHCTAEEIKRGRGIKEDGTPGGERYACKHRDQSIEQNLQEFRDMRDGKYKPGEAILRMKQDLNSPSPQMWDLIAYRVLNAPHPRTGTKWRIYPTYDFTHCLVDSMENITHSLCTTEFYLSRESYEWLCDQVHVFRPAQREYGRLNITGTVLSKRKIAQLVDEKFVRGWDDPRLFTLEAIRRRGVPPGAILSFINTLGVTTSTTNIQVVRFESAVRKYLEDTTPRLMFVLDPVEVVVDNLSDDYEELATIPYRPGTPEFGERTVPFTNKFYIERSDFSENVDDKEFFRLTPNQPVGLIKVSHTVSFKSLEKDEAGKIIRIHVNYDNKVEEGSKPKKPKTYIQWVPISSKYNSPLRVTETRVYNQLFKSENPSSHPEGFLKDINPESEVVYKESVMEHNFGDVVKNSPWVVDSVKNSEFYVEEDKDSKEVCRFQAMRVGYFTLDKESTTSKVILNRIVSLKDATSK.

Residues 185–198 (DLIKKKTKNNEKKK) show a composition bias toward basic and acidic residues. The segment at 185 to 216 (DLIKKKTKNNEKKKTNSAKKSSDNSASSGPKR) is disordered. The 'HIGH' region signature appears at 258–268 (PEPNGYLHIGH). ATP contacts are provided by residues 259-261 (EPN) and 265-271 (HIGHSKA). Position 291 (Asp-291) interacts with L-glutamine. Ser-378 carries the phosphoserine modification. L-glutamine is bound at residue Tyr-440. ATP contacts are provided by residues Thr-459, 488 to 489 (RL), and 496 to 498 (LSK). Residues 495–499 (VLSKR) carry the 'KMSKS' region motif.

Belongs to the class-I aminoacyl-tRNA synthetase family.

It catalyses the reaction tRNA(Gln) + L-glutamine + ATP = L-glutaminyl-tRNA(Gln) + AMP + diphosphate. The polypeptide is Glutamine--tRNA ligase (GLN4) (Saccharomyces cerevisiae (strain ATCC 204508 / S288c) (Baker's yeast)).